The sequence spans 316 residues: tRNA methyltransferase 10 homolog B (316 aa).

A coiled-coil region spans residues 73 to 98 (EKIVAAKKSKRKQEKERRKANRVENS). A disordered region spans residues 77–96 (AAKKSKRKQEKERRKANRVE). Positions 113–310 (IKERLLEAKH…KGVSSRKGYV (198 aa)) constitute an SAM-dependent MTase TRM10-type domain.

Belongs to the class IV-like SAM-binding methyltransferase superfamily. TRM10 family.

The enzyme catalyses guanosine(9) in tRNA + S-adenosyl-L-methionine = N(1)-methylguanosine(9) in tRNA + S-adenosyl-L-homocysteine + H(+). In terms of biological role, S-adenosyl-L-methionine-dependent guanine N(1)-methyltransferase that catalyzes the formation of N(1)-methylguanine at position 9 (m1G9) in tRNAs. Probably not able to catalyze formation of N(1)-methyladenine at position 9 (m1A9) in tRNAs. The protein is tRNA methyltransferase 10 homolog B (TRMT10B) of Bos taurus (Bovine).